A 1704-amino-acid polypeptide reads, in one-letter code: Phospholipid-transporting ATPase ABCA3 (1704 aa).

N-linked (GlcNAc...) asparagine glycosylation occurs at Asn14. Residues 22-42 form a helical membrane-spanning segment; it reads VLVTVLELFLPLLFSGILIWL. N-linked (GlcNAc...) asparagine glycosylation is found at Asn53, Asn124, and Asn140. Helical transmembrane passes span 261–283, 307–327, 344–364, 373–393, 405–425, and 447–467; these read YQLP…RAVV, AWFL…TLLF, SLVL…SFMV, MAAA…FFVA, LCSC…IGKF, and FCFG…GLVT. The region spanning 530–763 is the ABC transporter 1 domain; that stretch reads IKIKHLSKVF…YGAGYHMTLV (234 aa). 566–573 is a binding site for ATP; the sequence is GHNGAGKT. Residues Asn620 and Asn783 are each glycosylated (N-linked (GlcNAc...) asparagine). The next 7 helical transmembrane spans lie at 925 to 945, 1100 to 1120, 1144 to 1164, 1183 to 1203, 1213 to 1233, 1245 to 1265, and 1306 to 1326; these read MVAA…LAIN, IALN…ILAV, SALL…LVVF, LLLL…NFFF, LTIF…IMRI, LDHV…SSFY, and FVAS…LIET. The region spanning 1381–1614 is the ABC transporter 2 domain; that stretch reads LIIKELSKVY…FGSGYSLRAK (234 aa). 1416–1423 provides a ligand contact to ATP; it reads GFNGAGKT.

It belongs to the ABC transporter superfamily. ABCA family. In terms of assembly, homooligomer; disulfide-linked. N-glycosylated. Localization at intracellular vesicles is accompanied by processing of oligosaccharide from high mannose type to complex type. N-linked glycosylation at Asn-124 and Asn-140 is required for stability and efficient anterograde trafficking and prevents from proteasomal degradation. Post-translationally, proteolytically cleaved by CTSL and to a lower extent by CTSB within multivesicular bodies (MVB) and lamellar bodies (LB) leading to a mature form of 150 kDa. Expressed in brain, pancreas, skeletal muscle and heart. Highly expressed in the lung in an AT2-cell-specific manner. Weakly expressed in placenta, kidney and liver. Also expressed in medullary thyroid carcinoma cells (MTC) and in C-cell carcinoma.

It localises to the endosome. Its subcellular location is the multivesicular body membrane. The protein localises to the cytoplasmic vesicle membrane. The protein resides in the late endosome membrane. It is found in the lysosome membrane. It catalyses the reaction ATP + H2O + xenobioticSide 1 = ADP + phosphate + xenobioticSide 2.. It carries out the reaction a 1,2-diacyl-sn-glycero-3-phosphocholine(in) + ATP + H2O = a 1,2-diacyl-sn-glycero-3-phosphocholine(out) + ADP + phosphate + H(+). The enzyme catalyses ATP + H2O + phospholipidSide 1 = ADP + phosphate + phospholipidSide 2.. The catalysed reaction is 1,2-dihexadecanoyl-sn-glycero-3-phosphocholine(in) + ATP + H2O = 1,2-dihexadecanoyl-sn-glycero-3-phosphocholine(out) + ADP + phosphate + H(+). It catalyses the reaction cholesterol(in) + ATP + H2O = cholesterol(out) + ADP + phosphate + H(+). It carries out the reaction a 1,2-diacyl-sn-glycero-3-phospho-(1'-sn-glycerol)(in) + ATP + H2O = a 1,2-diacyl-sn-glycero-3-phospho-(1'-sn-glycerol)(out) + ADP + phosphate + H(+). With respect to regulation, the ATP-dependent phosphatidylcholine transport is competitively inhibited by miltefosine. Catalyzes the ATP-dependent transport of phospholipids such as phosphatidylcholine and phosphoglycerol from the cytoplasm into the lumen side of lamellar bodies, in turn participates in the lamellar bodies biogenesis and homeostasis of pulmonary surfactant. Transports preferentially phosphatidylcholine containing short acyl chains. In addition plays a role as an efflux transporter of miltefosine across macrophage membranes and free cholesterol (FC) through intralumenal vesicles by removing FC from the cell as a component of surfactant and protects cells from free cholesterol toxicity. The sequence is that of Phospholipid-transporting ATPase ABCA3 from Homo sapiens (Human).